A 387-amino-acid chain; its full sequence is Phosphoglycerate kinase (387 aa).

Substrate-binding positions include 21–23 (DLN), R36, 59–62 (HLGR), R113, and R146. ATP-binding positions include K197, E314, and 340–343 (GGDT).

Belongs to the phosphoglycerate kinase family. As to quaternary structure, monomer.

It is found in the cytoplasm. It catalyses the reaction (2R)-3-phosphoglycerate + ATP = (2R)-3-phospho-glyceroyl phosphate + ADP. Its pathway is carbohydrate degradation; glycolysis; pyruvate from D-glyceraldehyde 3-phosphate: step 2/5. The chain is Phosphoglycerate kinase from Aliivibrio salmonicida (strain LFI1238) (Vibrio salmonicida (strain LFI1238)).